The sequence spans 655 residues: p-hydroxybenzoic acid efflux pump subunit AaeB (655 aa).

10 helical membrane-spanning segments follow: residues 13–33, 38–58, 69–89, 93–113, 121–141, 152–172, 370–390, 407–427, 431–451, and 482–502; these read FAVK…HFQL, WAVL…GGEP, LRII…IAMI, LLMI…SSLV, WGLA…EPLL, EIVI…PRSI, LFWL…IAVV, FIYG…VIIP, QSML…GIEV, and FLDS…VILL.

It belongs to the aromatic acid exporter ArAE (TC 2.A.85) family.

It is found in the cell inner membrane. In terms of biological role, forms an efflux pump with AaeA. Could function as a metabolic relief valve, allowing to eliminate certain compounds when they accumulate to high levels in the cell. The sequence is that of p-hydroxybenzoic acid efflux pump subunit AaeB from Shigella dysenteriae serotype 1 (strain Sd197).